The chain runs to 679 residues: Glycine--tRNA ligase beta subunit (679 aa).

It belongs to the class-II aminoacyl-tRNA synthetase family. Tetramer of two alpha and two beta subunits.

It localises to the cytoplasm. The enzyme catalyses tRNA(Gly) + glycine + ATP = glycyl-tRNA(Gly) + AMP + diphosphate. The polypeptide is Glycine--tRNA ligase beta subunit (Streptococcus pyogenes serotype M49 (strain NZ131)).